Here is an 864-residue protein sequence, read N- to C-terminus: Leucine--tRNA ligase (864 aa).

The short motif at 50–60 (PYPSGKIHMGH) is the 'HIGH' region element. A 'KMSKS' region motif is present at residues 622 to 626 (KMSKS). K625 contributes to the ATP binding site.

Belongs to the class-I aminoacyl-tRNA synthetase family.

It is found in the cytoplasm. It catalyses the reaction tRNA(Leu) + L-leucine + ATP = L-leucyl-tRNA(Leu) + AMP + diphosphate. The protein is Leucine--tRNA ligase of Acidiphilium cryptum (strain JF-5).